Reading from the N-terminus, the 336-residue chain is CENP-A histone chaperone scm3 (336 aa).

The interval Arg-243–Asn-269 is disordered. A compositionally biased stretch (basic residues) spans Pro-255 to Asn-269.

It localises to the cytoplasm. The protein resides in the nucleus. Functionally, centromeric protein that plays a central role in the incorporation and maintenance of histone H3-like variant CENPA at centromeres. The sequence is that of CENP-A histone chaperone scm3 from Schizosaccharomyces pombe (strain 972 / ATCC 24843) (Fission yeast).